An 84-amino-acid chain; its full sequence is Large ribosomal subunit protein bL27 (84 aa).

Positions 1-21 (MAHKKGGGSTKNGRDSNPKYL) are disordered.

It belongs to the bacterial ribosomal protein bL27 family.

This Chlorobaculum parvum (strain DSM 263 / NCIMB 8327) (Chlorobium vibrioforme subsp. thiosulfatophilum) protein is Large ribosomal subunit protein bL27.